Consider the following 244-residue polypeptide: MAGHSKWANIKHAKARQDAKRGKVFTKLIREITVAARLGGEDIDSNPRLRAVVDKAFAANMPKDTITRAIKRGAGSGAGDNLVEVRYEGYGPSGVAVMVDCLTDNKNRTVAEVRHAFSKCDGNLGTEGSVAYLFKQRGLITFPPNSDEEKIMEIALEVGAEDVTTNDDGSIDVTTLPEDFEKIRNAMKAADLNPSHAEVTVLASTEVGLDKDSAEQMLRLTEMLEDLDDVQNVYSNADYPEEVL.

Belongs to the TACO1 family.

The protein resides in the cytoplasm. In Coxiella burnetii (strain RSA 493 / Nine Mile phase I), this protein is Probable transcriptional regulatory protein CBU_1566.